The primary structure comprises 158 residues: NAD(P)H-quinone oxidoreductase subunit J, chloroplastic (158 aa).

This sequence belongs to the complex I 30 kDa subunit family. NDH is composed of at least 16 different subunits, 5 of which are encoded in the nucleus.

It is found in the plastid. Its subcellular location is the chloroplast thylakoid membrane. The enzyme catalyses a plastoquinone + NADH + (n+1) H(+)(in) = a plastoquinol + NAD(+) + n H(+)(out). The catalysed reaction is a plastoquinone + NADPH + (n+1) H(+)(in) = a plastoquinol + NADP(+) + n H(+)(out). In terms of biological role, NDH shuttles electrons from NAD(P)H:plastoquinone, via FMN and iron-sulfur (Fe-S) centers, to quinones in the photosynthetic chain and possibly in a chloroplast respiratory chain. The immediate electron acceptor for the enzyme in this species is believed to be plastoquinone. Couples the redox reaction to proton translocation, and thus conserves the redox energy in a proton gradient. The polypeptide is NAD(P)H-quinone oxidoreductase subunit J, chloroplastic (Nicotiana tabacum (Common tobacco)).